A 174-amino-acid chain; its full sequence is Large ribosomal subunit protein uL18 (174 aa).

It belongs to the universal ribosomal protein uL18 family. As to quaternary structure, part of the 50S ribosomal subunit. Contacts the 5S and 23S rRNAs.

Its function is as follows. This is one of the proteins that bind and probably mediate the attachment of the 5S RNA into the large ribosomal subunit, where it forms part of the central protuberance. The chain is Large ribosomal subunit protein uL18 from Methanocorpusculum labreanum (strain ATCC 43576 / DSM 4855 / Z).